The following is a 313-amino-acid chain: UPF0761 membrane protein VS_0126 (313 aa).

6 consecutive transmembrane segments (helical) span residues 41–61 (YLAY…LSIL), 104–124 (MTAV…SNID), 139–159 (AVLS…LIGA), 185–205 (VIRK…YLLV), 217–237 (AGSL…AAYI), and 249–269 (ALAA…IVLV). A compositionally biased stretch (polar residues) spans 281-290 (EQWSDSQEMV). Residues 281-313 (EQWSDSQEMVHSSDKDKITEQGNNSDSTDPESK) form a disordered region.

Belongs to the UPF0761 family.

It is found in the cell inner membrane. This chain is UPF0761 membrane protein VS_0126, found in Vibrio atlanticus (strain LGP32) (Vibrio splendidus (strain Mel32)).